The following is a 691-amino-acid chain: Menaquinone reductase, molybdopterin-binding-like subunit (691 aa).

The tat-type signal signal peptide spans 1–27 (MALDRRGFLKFIGGATAGILATPVVWK). The 57-residue stretch at 50 to 106 (NSYVPTVSKLCPTGIGVRVRLVDGRPVRVIGNPEHPLSKGGVSSIAAAEVQMLYSPA) folds into the 4Fe-4S Mo/W bis-MGD-type domain.

This sequence belongs to the prokaryotic molybdopterin-containing oxidoreductase family. In terms of assembly, the Qrc complex is composed of four subunits: QrcA, QrcB, QrcC and QrcD. Can form a supercomplex with the [NiFe] hydrogenase HynA1 and the tetraheme Type I cytochrome c3 TpIc(3), its physiological electron donors. It depends on There is no molybdenum or tungsten pterin cofactor present in the Qrc complex, despite the similarity of QrcB to molybdopterin-containing oxidoreductases. as a cofactor. Predicted to be exported by the Tat system. The position of the signal peptide cleavage has not been experimentally proven.

Its subcellular location is the periplasm. In terms of biological role, component of the respiratory Qrc complex, that catalyzes the reduction of the menaquinone pool using electrons transferred from the reduced periplasmic cytochrome c3, and which is probably involved in sulfate respiration. Is likely essential for growth on H(2) or formate since the periplasmic hydrogenases and/or formate dehydrogenases act as primary electron donors for the Qrc complex. The function of the QrcB subunit is unknown; in the absence of a catalytic site, it may provide a structural scaffold for the other subunits. This Nitratidesulfovibrio vulgaris (strain ATCC 29579 / DSM 644 / CCUG 34227 / NCIMB 8303 / VKM B-1760 / Hildenborough) (Desulfovibrio vulgaris) protein is Menaquinone reductase, molybdopterin-binding-like subunit.